The following is a 285-amino-acid chain: MFNWVKTAMLMAAITALFIVIGGMIGGSRGMTIALLIALGMNFFSYWFSDKMVLRMYNAQEVDEATAPQFYRMVRELATRANLPMPRVYLIDENQPNAFATGRNPEHAAVAATTGILRVLSEREMRGVMAHELAHVKHRDILISTISATMAGAISALANFAMFFGGRDENGRPANPIAGIAVALLAPIAGALIQMAISRAREFEADRGGAQISGDPQALASALDKIHRYASGIPFQTAEEHPATAQMMIMNPLSGGGLQNLFSTHPATEERIARLMDMARTGRFD.

The next 2 membrane-spanning stretches (helical) occupy residues 7–27 (TAML…MIGG) and 30–50 (GMTI…WFSD). H131 lines the Zn(2+) pocket. The active site involves E132. H135 provides a ligand contact to Zn(2+). A run of 2 helical transmembrane segments spans residues 146–166 (ISAT…FFGG) and 177–197 (IAGI…QMAI). Residue E202 participates in Zn(2+) binding.

It belongs to the peptidase M48B family. The cofactor is Zn(2+).

The protein localises to the cell inner membrane. In Burkholderia mallei (strain NCTC 10247), this protein is Protease HtpX homolog.